Consider the following 232-residue polypeptide: Anti-sigma-K factor RskA (232 aa).

The Cytoplasmic portion of the chain corresponds to 1 to 90 (MTEHTDFELL…EVRRQSRWRT (90 aa)). A helical membrane pass occupies residues 91 to 111 (AAFASAAAIAVGLGAFGLGVL). Residues 112–232 (TRPSPPPTVA…GTILAELPLG (121 aa)) lie on the Extracellular side of the membrane.

It belongs to the anti-sigma-K factor family.

The protein resides in the cell membrane. An anti-sigma factor for extracytoplasmic function (ECF) sigma factor SigK. ECF sigma factors are held in an inactive form by an anti-sigma factor until released by regulated intramembrane proteolysis (RIP). RIP occurs when an extracytoplasmic signal triggers a concerted proteolytic cascade to transmit information and elicit cellular responses. The membrane-spanning regulatory substrate protein is first cut extracytoplasmically (site-1 protease, S1P), then within the membrane itself (site-2 protease, S2P, Rip1), while cytoplasmic proteases finish degrading the regulatory protein, liberating the sigma factor. This is Anti-sigma-K factor RskA (rskA) from Mycobacterium tuberculosis (strain ATCC 25177 / H37Ra).